Consider the following 440-residue polypeptide: Glutamyl-tRNA reductase (440 aa).

Substrate-binding positions include 47 to 50 (TCNR), Ser110, 115 to 117 (ERE), and Gln121. The active-site Nucleophile is the Cys48. An NADP(+)-binding site is contributed by 192 to 197 (GTGAYA).

The protein belongs to the glutamyl-tRNA reductase family. As to quaternary structure, homodimer.

It catalyses the reaction (S)-4-amino-5-oxopentanoate + tRNA(Glu) + NADP(+) = L-glutamyl-tRNA(Glu) + NADPH + H(+). The protein operates within porphyrin-containing compound metabolism; protoporphyrin-IX biosynthesis; 5-aminolevulinate from L-glutamyl-tRNA(Glu): step 1/2. In terms of biological role, catalyzes the NADPH-dependent reduction of glutamyl-tRNA(Glu) to glutamate 1-semialdehyde (GSA). In Paenarthrobacter aurescens (strain TC1), this protein is Glutamyl-tRNA reductase.